Consider the following 231-residue polypeptide: Ribosyldihydronicotinamide dehydrogenase [quinone] (231 aa).

Residues His-12 and 18–21 (FNGS) each bind FAD. Ser-80 carries the phosphoserine modification. FAD is bound at residue 104-107 (LYWF). Residue 127–129 (FDI) participates in substrate binding. FAD is bound by residues 148 to 151 (TTGG) and Tyr-156. Residues His-174 and His-178 each contribute to the Zn(2+) site. An FAD-binding site is contributed by Glu-194. Ser-197 is modified (phosphoserine). Residue Arg-201 participates in FAD binding. Cys-223 serves as a coordination point for Zn(2+).

Belongs to the NAD(P)H dehydrogenase (quinone) family. Homodimer. Zn(2+) serves as cofactor. It depends on FAD as a cofactor.

It is found in the cytoplasm. The enzyme catalyses 1-(beta-D-ribofuranosyl)-1,4-dihydronicotinamide + a quinone + H(+) = beta-nicotinamide D-riboside + a quinol. Functionally, the enzyme apparently serves as a quinone reductase in connection with conjugation reactions of hydroquinones involved in detoxification pathways as well as in biosynthetic processes such as the vitamin K-dependent gamma-carboxylation of glutamate residues in prothrombin synthesis. This is Ribosyldihydronicotinamide dehydrogenase [quinone] (NQO2) from Pongo abelii (Sumatran orangutan).